Consider the following 550-residue polypeptide: Dihydroxy-acid dehydratase (550 aa).

Residue Asp-78 participates in Mg(2+) binding. Position 119 (Cys-119) interacts with [2Fe-2S] cluster. Mg(2+)-binding residues include Asp-120 and Lys-121. Lys-121 bears the N6-carboxylysine mark. Cys-191 is a [2Fe-2S] cluster binding site. Glu-440 lines the Mg(2+) pocket. Residue Ser-466 is the Proton acceptor of the active site.

The protein belongs to the IlvD/Edd family. In terms of assembly, homodimer. The cofactor is [2Fe-2S] cluster. It depends on Mg(2+) as a cofactor.

The catalysed reaction is (2R)-2,3-dihydroxy-3-methylbutanoate = 3-methyl-2-oxobutanoate + H2O. The enzyme catalyses (2R,3R)-2,3-dihydroxy-3-methylpentanoate = (S)-3-methyl-2-oxopentanoate + H2O. It functions in the pathway amino-acid biosynthesis; L-isoleucine biosynthesis; L-isoleucine from 2-oxobutanoate: step 3/4. The protein operates within amino-acid biosynthesis; L-valine biosynthesis; L-valine from pyruvate: step 3/4. Functionally, functions in the biosynthesis of branched-chain amino acids. Catalyzes the dehydration of (2R,3R)-2,3-dihydroxy-3-methylpentanoate (2,3-dihydroxy-3-methylvalerate) into 2-oxo-3-methylpentanoate (2-oxo-3-methylvalerate) and of (2R)-2,3-dihydroxy-3-methylbutanoate (2,3-dihydroxyisovalerate) into 2-oxo-3-methylbutanoate (2-oxoisovalerate), the penultimate precursor to L-isoleucine and L-valine, respectively. In Methanococcus maripaludis (strain C6 / ATCC BAA-1332), this protein is Dihydroxy-acid dehydratase.